The following is a 647-amino-acid chain: DNA mismatch repair protein MutL (647 aa).

The protein belongs to the DNA mismatch repair MutL/HexB family.

In terms of biological role, this protein is involved in the repair of mismatches in DNA. It is required for dam-dependent methyl-directed DNA mismatch repair. May act as a 'molecular matchmaker', a protein that promotes the formation of a stable complex between two or more DNA-binding proteins in an ATP-dependent manner without itself being part of a final effector complex. The sequence is that of DNA mismatch repair protein MutL from Bacillus thuringiensis subsp. konkukian (strain 97-27).